The sequence spans 215 residues: Protein C' (215 aa).

Disordered regions lie at residues 12–34 (MPSF…SRSR) and 51–71 (SEGT…QALP). Positions 15 to 22 (FLKKILKL) are involved in self-degradation and in host STAT1 degradation. The span at 51–65 (SEGTEAGSTTPSTLP) shows a compositional bias: polar residues.

Belongs to the respirovirus protein C family. As to quaternary structure, the different isoforms interact (via C-terminus) with unphosphorylated and phosphorylated human STAT1 (via N-terminus), favoring the formation of parallel STAT1 homodimers. The different isoforms do not interact with host STAT2. C protein interacts with L protein; this interaction has an inhibitory effect on viral transcription and replication. Y1 and Y2 proteins are produced not only by alternative initiation, but also by proteolytic cleavage of C'. Only alternative initiation is detected in vitro, whereas in vivo cleavage seems to be predominant.

The protein localises to the host cytoplasm. The different products prevent the establishment of cellular antiviral state by blocking the interferon-alpha/beta (IFN-alpha/beta) and IFN-gamma signaling pathways. They inhibit IFN-alpha/beta induced tyrosine phosphorylation of STAT1 and STAT2. Blocking the IFN-alpha/beta pathway requires binding to STAT1 in the cytoplasm. They inhibit IFN-gamma induced serine phosphorylation of STAT1. Block the IFN-gamma pathway by binding to and stabilizing the parallel form of the STAT1 dimer, further inducing high-molecular-weight complex formation and inhibition of transcription by IFN-gamma. May also have a role in preventing the cell to enter apoptosis. Modulate regulation of viral transcription and replication. Overexpression inhibits the viral RNA polymerase. The absence of all C', C, Y1 and Y2 proteins leads to viral delayed growth. Plays an important role in virion particles release. Modulates virion shape. The protein is Protein C' (P/V/C) of Sendai virus (strain Harris) (SeV).